We begin with the raw amino-acid sequence, 213 residues long: MQAYQRDFIRFAIDRGVLRFGEFTLKSGRTSPYFFNAGLFNTGSALAQLGRFYAAAVVESGIAFDVLFGPAYKGIPLASATAVALAEHHDRDLPWCFNRKEAKAHGEGGSLVGSPLAGNVLIIDDVITAGTAIREVMQIIKDQDATAAGVLIALNRQERGNGELSAIQEVERDFGIPVVSIVSLNQVLEFLADDPQLKQHLPAVEAYRAQFGI.

Lys26 provides a ligand contact to 5-phospho-alpha-D-ribose 1-diphosphate. Residue 34-35 (FF) coordinates orotate. Residues 72–73 (YK), Arg99, Lys100, Lys103, His105, and 124–132 (DDVITAGTA) contribute to the 5-phospho-alpha-D-ribose 1-diphosphate site. Orotate is bound by residues Thr128 and Arg156.

Belongs to the purine/pyrimidine phosphoribosyltransferase family. PyrE subfamily. Homodimer. Mg(2+) serves as cofactor.

The catalysed reaction is orotidine 5'-phosphate + diphosphate = orotate + 5-phospho-alpha-D-ribose 1-diphosphate. It participates in pyrimidine metabolism; UMP biosynthesis via de novo pathway; UMP from orotate: step 1/2. In terms of biological role, catalyzes the transfer of a ribosyl phosphate group from 5-phosphoribose 1-diphosphate to orotate, leading to the formation of orotidine monophosphate (OMP). The polypeptide is Orotate phosphoribosyltransferase (Pseudomonas syringae pv. syringae (strain B728a)).